Here is a 123-residue protein sequence, read N- to C-terminus: Thioredoxin domain-containing protein 17 (123 aa).

Residues 41–123 (SWCPDCVTAE…DLVRMMFTED (83 aa)) enclose the Thioredoxin domain. Residues Cys-43 and Cys-46 each act as nucleophile in the active site. Residues Cys-43 and Cys-46 are joined by a disulfide bond.

It belongs to the thioredoxin family. As to expression, predominantly expressed in liver, brain and muscle. Also expressed in kidney, intestine, skin, stomach, gill and head kidney.

It localises to the cytoplasm. Functionally, disulfide reductase. May participate in various redox reactions through the reversible oxidation of its active center dithiol to a disulfide and catalyze dithiol-disulfide exchange reactions. Has peroxidase activity and may contribute to the elimination of cellular hydrogen peroxide. May function as an antioxidant involved in response to viral infection. The polypeptide is Thioredoxin domain-containing protein 17 (Epinephelus coioides (Orange-spotted grouper)).